A 725-amino-acid polypeptide reads, in one-letter code: Non-structural protein 4 (725 aa).

Disordered regions lie at residues M1–N26 and D666–E725. The segment covering T7–P16 has biased composition (polar residues). Residues E675–D686 are compositionally biased toward basic and acidic residues. The segment covering D687 to D709 has biased composition (acidic residues).

The chain is Non-structural protein 4 from Rice gall dwarf virus (RGDV).